A 335-amino-acid chain; its full sequence is Fructose-1,6-bisphosphatase class 1 (335 aa).

Residues Glu-92, Asp-115, Leu-117, and Asp-118 each coordinate Mg(2+). Residues 118–121 (DGSS), Asn-211, Tyr-244, 262–264 (YLY), and Lys-274 each bind substrate. Glu-280 provides a ligand contact to Mg(2+).

This sequence belongs to the FBPase class 1 family. Homotetramer. Requires Mg(2+) as cofactor.

It is found in the cytoplasm. The catalysed reaction is beta-D-fructose 1,6-bisphosphate + H2O = beta-D-fructose 6-phosphate + phosphate. It functions in the pathway carbohydrate biosynthesis; gluconeogenesis. The chain is Fructose-1,6-bisphosphatase class 1 from Teredinibacter turnerae (strain ATCC 39867 / T7901).